We begin with the raw amino-acid sequence, 859 residues long: MNGLCCCTPCKPRYRRLVDSIYPRAVTDGLLHSNMQKLTFYAISHPEKLERIGEYLVMRMVRDLNRQRPVQVKIAVEAMDQLLQACHSSPSLPQFSENHLRMVQRLLESNNAKMEQLATDSFVTFSNIEESSPSYHRQYDFFIDKFSQMCHANPQAAYGEDFRLARCAGLRGLRGVVWKSVTDDLHPNIWEQQHMDKIVPSILFNLQEPDDNGGFSSSHIPKFDNNFTDSTQSHRGDDEATPKVLSDRCLRELMGKASFGSLRAVIEPVLKHMDLHKRWSPPPSFAIHVFRAIIYSIQSQNSYFVIQELINHLDSMCSADASTRIGIATVLSSIVSIAGTSIGPLLLSIFNSLLKHLRTSVDFERSGKCSDQPAEKMYQEALINAMGDFANALPDYQKVEMMMFTVGNIPNLDERKSKQGEEFLQHVLVKTLLKVATKYRTAYLATVFTDSFLDTLLRLALVRDPQVRLATQQIFHTLLDRHDNAANLVHLGYELDVADVQLTVEKCSRADQMFMRKHIGDITYMLWRAAAAADETDLSTHADAILCTMSLLCIESLVELFRLSMALQQLALDTKQNFSDAKRNSIHNIVAKYMNLSAQLIANPSLCQQVQHVVGCRAQRGIPGLNLLLSVKESPMNDDPLSSTAVNGTIPEGTPRTITEGDHALLFNIEDVAESLKASGKDASRLFVPFNMSLNGRDGNGDSWQREDGQNFDSTDGRESPDGYKTVGIDDVSVDMSVDWTPPISRKQSRRNTIFSIVNPPKLNASTVDDLKAYANASFDPIEEDRKEKELTGSILSEIRNTDFEERVNTNESLNERGDLSKSIARLLVRNGETTKVRDIGRPTKPKNVFEIELPSFAY.

Disordered stretches follow at residues 638–657 (DDPL…TPRT) and 697–724 (RDGN…PDGY). A compositionally biased stretch (basic and acidic residues) spans 704-722 (WQREDGQNFDSTDGRESPD).

The protein belongs to the EFR3 family.

This Caenorhabditis briggsae protein is Protein EFR3 homolog.